The chain runs to 448 residues: UDP-glycosyltransferase 79B5 (448 aa).

UDP-alpha-D-glucose-binding positions include threonine 261, 320–322 (LEQ), 337–345 (HCGFGSMWE), and 359–362 (LADQ).

The protein belongs to the UDP-glycosyltransferase family.

This is UDP-glycosyltransferase 79B5 (UGT79B5) from Arabidopsis thaliana (Mouse-ear cress).